A 179-amino-acid chain; its full sequence is uncharacterized protein (179 aa).

The segment covering 1 to 15 has biased composition (basic and acidic residues); the sequence is MQRQTGHMEDKKRTG. Residues 1 to 32 form a disordered region; it reads MQRQTGHMEDKKRTGLESQGTENAFSDGRDGK.

This is an uncharacterized protein from Gallus gallus (Chicken).